Consider the following 152-residue polypeptide: UPF0178 protein SAS0646 (152 aa).

This sequence belongs to the UPF0178 family.

This Staphylococcus aureus (strain MSSA476) protein is UPF0178 protein SAS0646.